The chain runs to 469 residues: Putative dipeptidase SH1171 (469 aa).

His84 is a binding site for Zn(2+). The active site involves Asp86. Asp115 lines the Zn(2+) pocket. Glu149 acts as the Proton acceptor in catalysis. Zn(2+) contacts are provided by Glu150, Asp173, and His440.

This sequence belongs to the peptidase M20A family. It depends on Zn(2+) as a cofactor.

In Staphylococcus haemolyticus (strain JCSC1435), this protein is Putative dipeptidase SH1171.